The sequence spans 253 residues: Complement C1q subcomponent subunit B (253 aa).

A signal peptide spans 1 to 27; it reads MMMKIPWGSIPVLMLLLLLGLIDISQA. The residue at position 28 (Gln-28) is a Pyrrolidone carboxylic acid. A 4-hydroxyproline mark is found at Pro-35, Pro-38, Pro-41, Pro-53, and Pro-56. 2 Collagen-like domains span residues 37-86 and 60-114; these read IPGI…PGNP and GEKG…GESG. Residues 38–115 form a disordered region; the sequence is PGIPGIPGTP…APGPKGESGD (78 aa). 2 positions are modified to 5-hydroxylysine: Lys-59 and Lys-62. Pro-65 is modified (4-hydroxyproline). The segment covering 70 to 79 has biased composition (basic and acidic residues); the sequence is DHGEFGEKGD. Lys-77 bears the 5-hydroxylysine mark. Residues 80–92 are compositionally biased toward low complexity; sequence PGIPGNPGKVGPK. 4-hydroxyproline is present on residues Pro-83 and Pro-86. 2 positions are modified to 5-hydroxylysine: Lys-92 and Lys-98. Residues 96-105 show a composition bias toward gly residues; sequence GPKGGPGAPG. Pro-101, Pro-104, and Pro-107 each carry 4-hydroxyproline. 5-hydroxylysine is present on Lys-110. One can recognise a C1q domain in the interval 117–253; that stretch reads KATQKIAFSA…GFLLFPDMEA (137 aa). A disulfide bridge links Cys-181 with Cys-198. Ca(2+)-binding residues include Asp-199, Tyr-200, and Gln-206.

Core component of the complement C1 complex, a calcium-dependent complex composed of 1 molecule of the C1Q subcomplex, 2 molecules of C1R and 2 molecules of C1S. The C1Q subcomplex is composed 18 subunits: 3 chains of C1QA, C1QB, and C1QC trimerize to form 6 collagen-like triple helices connected to six globular ligand-recognition modules (C1q domain). Hydroxylated on lysine and proline residues. Hydroxylated lysine residues can be glycosylated. Human C1Q contains up to 68.3 hydroxylysine-galactosylglucose residues and up to 2.5 hydroxylysine-galactose per molecule. Total percentage hydroxylysine residues glycosylated is 86.4%.

It is found in the secreted. It localises to the cell surface. The C1Q subcomplex is inhibited by sulfated molecules, such as triterpenoid sulfates, heparan sulfate, or chondroitin sulfates. Core component of the complement C1 complex, a multiprotein complex that initiates the classical pathway of the complement system, a cascade of proteins that leads to phagocytosis and breakdown of pathogens and signaling that strengthens the adaptive immune system. The classical complement pathway is initiated by the C1Q subcomplex of the C1 complex, which specifically binds IgG or IgM immunoglobulins complexed with antigens, forming antigen-antibody complexes on the surface of pathogens: C1QA, together with C1QB and C1QC, specifically recognizes and binds the Fc regions of IgG or IgM via its C1q domain. Immunoglobulin-binding activates the proenzyme C1R, which cleaves C1S, initiating the proteolytic cascade of the complement system. The C1Q subcomplex is activated by a hexamer of IgG complexed with antigens, while it is activated by a pentameric IgM. The C1Q subcomplex also recognizes and binds phosphatidylserine exposed on the surface of cells undergoing programmed cell death, possibly promoting activation of the complement system. This Homo sapiens (Human) protein is Complement C1q subcomponent subunit B.